Reading from the N-terminus, the 423-residue chain is Heat shock transcription factor, X-linked (423 aa).

Over residues 1–25 (MEDKRSLSMARCEERNSRGQDHGLE) the composition is skewed to basic and acidic residues. 3 disordered regions span residues 1–56 (MEDK…STGS), 215–303 (KSAP…EGSQ), and 397–423 (PHSHRTSQYMPASDGPQAYPDYADQST). Residues 98–282 (PFPQKLWRLV…PATPVMVPDS (185 aa)) mediate DNA binding. Lysine 215 is covalently cross-linked (Glycyl lysine isopeptide (Lys-Gly) (interchain with G-Cter in SUMO1)). Over residues 243–254 (HTSPNENDQVTP) the composition is skewed to polar residues.

This sequence belongs to the HSF family. Testis-specific.

The protein localises to the nucleus. It localises to the cytoplasm. This Homo sapiens (Human) protein is Heat shock transcription factor, X-linked (HSFX1).